The following is a 264-amino-acid chain: MKQYLDLLDRVLTEGIEKGDRTGTGTISVFGHQMRFNLDEGFPCLTTKKLHLKSIIYELLWFLKGDTNVKYLQDHGVRIWNEWADETGDLGHIYGYQWRSWPTYDGGFIDQISEAVDAIKHNPDSRRIIVSAWNVGDLDHMNLPPCHAFFQFYVANGRLSLQLYQRSADIFLGVPFNIASYALLLQMMAQVTGLQAGDFIHTLGDAHIYLNHLEQVKLQLSREPRPLPQMKINPDVKNIFDFQFEDFELVNYDPHPHIAGKVAV.

Arg-21 is a binding site for dUMP. His-51 provides a ligand contact to (6R)-5,10-methylene-5,6,7,8-tetrahydrofolate. DUMP is bound at residue 126–127 (RR). The Nucleophile role is filled by Cys-146. DUMP contacts are provided by residues 166–169 (RSAD), Asn-177, and 207–209 (HIY). Residue Asp-169 coordinates (6R)-5,10-methylene-5,6,7,8-tetrahydrofolate. Ala-263 serves as a coordination point for (6R)-5,10-methylene-5,6,7,8-tetrahydrofolate.

Belongs to the thymidylate synthase family. Bacterial-type ThyA subfamily. Homodimer.

It is found in the cytoplasm. The catalysed reaction is dUMP + (6R)-5,10-methylene-5,6,7,8-tetrahydrofolate = 7,8-dihydrofolate + dTMP. Its pathway is pyrimidine metabolism; dTTP biosynthesis. Functionally, catalyzes the reductive methylation of 2'-deoxyuridine-5'-monophosphate (dUMP) to 2'-deoxythymidine-5'-monophosphate (dTMP) while utilizing 5,10-methylenetetrahydrofolate (mTHF) as the methyl donor and reductant in the reaction, yielding dihydrofolate (DHF) as a by-product. This enzymatic reaction provides an intracellular de novo source of dTMP, an essential precursor for DNA biosynthesis. In Bacteroides fragilis (strain ATCC 25285 / DSM 2151 / CCUG 4856 / JCM 11019 / LMG 10263 / NCTC 9343 / Onslow / VPI 2553 / EN-2), this protein is Thymidylate synthase.